The following is a 115-amino-acid chain: Large ribosomal subunit protein bL20 (115 aa).

The protein belongs to the bacterial ribosomal protein bL20 family.

Functionally, binds directly to 23S ribosomal RNA and is necessary for the in vitro assembly process of the 50S ribosomal subunit. It is not involved in the protein synthesizing functions of that subunit. The protein is Large ribosomal subunit protein bL20 of Chlorobium phaeobacteroides (strain DSM 266 / SMG 266 / 2430).